Here is a 199-residue protein sequence, read N- to C-terminus: DnaJ homolog subfamily C member 5B (199 aa).

Residues serine 14 and serine 16 each carry the phosphoserine modification. A J domain is found at 19–84; the sequence is SLYEILGLHK…SKRNIYDKYG (66 aa).

As to quaternary structure, interacts with the chaperone complex consisting of HSC70 and SGTA. Palmitoylated.

Its subcellular location is the membrane. In Mus musculus (Mouse), this protein is DnaJ homolog subfamily C member 5B (Dnajc5b).